An 894-amino-acid chain; its full sequence is Translation initiation factor IF-2 (894 aa).

The tract at residues 52-301 (DRGAAPNKLT…RRPSTLTQGF (250 aa)) is disordered. Polar residues predominate over residues 68–82 (STLNIPSTGGKSKSV). The segment covering 107–154 (EQARREAEELAQHQVQRDAEEKAKRAAEDKAKREAAEQAKRVAAESDK) has biased composition (basic and acidic residues). Positions 155-168 (LTNQQTNTMTKSPQ) are enriched in polar residues. Composition is skewed to basic and acidic residues over residues 171 to 214 (EKAR…ERGG) and 237 to 254 (HARE…GDRR). The span at 255–269 (SRTRGGKATKQKKTS) shows a compositional bias: basic residues. Positions 270–283 (RLSESKADREEARA) are enriched in basic and acidic residues. The 170-residue stretch at 393–562 (SRAPVVTIMG…LLQAEVLELK (170 aa)) folds into the tr-type G domain. Residues 402–409 (GHVDHGKT) are G1. A GTP-binding site is contributed by 402-409 (GHVDHGKT). The interval 427 to 431 (GITQH) is G2. The segment at 448-451 (DTPG) is G3. Residues 448–452 (DTPGH) and 502–505 (NKID) each bind GTP. Residues 502–505 (NKID) form a G4 region. The interval 538-540 (SAK) is G5.

The protein belongs to the TRAFAC class translation factor GTPase superfamily. Classic translation factor GTPase family. IF-2 subfamily.

Its subcellular location is the cytoplasm. One of the essential components for the initiation of protein synthesis. Protects formylmethionyl-tRNA from spontaneous hydrolysis and promotes its binding to the 30S ribosomal subunits. Also involved in the hydrolysis of GTP during the formation of the 70S ribosomal complex. This chain is Translation initiation factor IF-2, found in Sodalis glossinidius (strain morsitans).